Consider the following 1188-residue polypeptide: Carboxylic acid reductase (1188 aa).

AMP is bound by residues His315, Ser408, 429–430 (DG), Thr434, Asp507, 519–522 (YVDR), Lys528, and Lys629. The region spanning 665–743 (AGERPVIETV…SVAAHIEKER (79 aa)) is the Carrier domain. Ser702 is modified (O-(pantetheine 4'-phosphoryl)serine). NADP(+) is bound by residues 801–804 (NGWL), Arg828, Arg838, 868–869 (DF), 894–896 (SGA), Ser934, Tyr970, Lys974, and Ser997.

Belongs to the ATP-dependent AMP-binding enzyme family. Carboxylic acid reductase subfamily. Pantetheine 4'-phosphate is required as a cofactor.

The catalysed reaction is a carboxylate + ATP + NADPH + H(+) = an aldehyde + AMP + diphosphate + NADP(+). Its function is as follows. Catalyzes the ATP- and NADPH-dependent reduction of carboxylic acids to the corresponding aldehydes. Catalyzes the reduction of a very wide range of carboxylic acids, including benzoic acids, heterocyclic, phenylacetic, phenylpropanoic and fatty acid substrates. This is Carboxylic acid reductase from Segniliparus rugosus (strain ATCC BAA-974 / DSM 45345 / CCUG 50838 / CIP 108380 / JCM 13579 / CDC 945).